Here is a 454-residue protein sequence, read N- to C-terminus: Probable N-octanoylanthranilate hydrolase AqdA2 (454 aa).

S185 acts as the Acyl-ester intermediate in catalysis. Residues E306 and H379 each act as charge relay system in the active site.

This sequence belongs to the type-B carboxylesterase/lipase family.

The enzyme catalyses N-octanoylanthranilate + H2O = anthranilate + octanoate + H(+). Functionally, involved in the degradation of the Pseudomonas aeruginosa quorum sensing signal molecules HHQ (2-heptyl-4-quinolone) and PQS (2-heptyl-3-hydroxy-4-quinolone) to anthranilic acid. Probably catalyzes the hydrolysis of N-octanoylanthranilic acid to anthranilic acid. In Rhodococcus erythropolis (Arthrobacter picolinophilus), this protein is Probable N-octanoylanthranilate hydrolase AqdA2.